A 770-amino-acid polypeptide reads, in one-letter code: Semaphorin-4F (770 aa).

Positions 1 to 34 (MPASAARPRPGPGQPTASPFPLLLLAVLSGPVSG) are cleaved as a signal peptide. The Extracellular segment spans residues 35–659 (RVPRSVPRTS…RDAPSRAHTV (625 aa)). The region spanning 42-510 (RTSLPISEAD…SRTEVTQVNT (469 aa)) is the Sema domain. The N-linked (GlcNAc...) asparagine glycan is linked to Asn-64. The cysteines at positions 112 and 122 are disulfide-linked. An N-linked (GlcNAc...) asparagine glycan is attached at Asn-133. Disulfide bonds link Cys-140–Cys-149, Cys-273–Cys-384, and Cys-297–Cys-343. Asn-509 is a glycosylation site (N-linked (GlcNAc...) asparagine). A PSI domain is found at 512–563 (NCGRLQSCSECILAQDPVCAWSFRLDECVAHAGEHRGLVQDIESADVSSLCP). 3 disulfides stabilise this stretch: Cys-513/Cys-530, Cys-522/Cys-539, and Cys-587/Cys-628. An Ig-like C2-type domain is found at 580–635 (AAHVVLPCSPSSAWASCVWHQPSGVTALTPRRDGLEVVVTPGAMGAYACECQEGGA). The helical transmembrane segment at 660 to 680 (GAGLAGFFLGILAASLTLILI) threads the bilayer. At 681–770 (GRRQQRRRQR…PLATCDETSI (90 aa)) the chain is on the cytoplasmic side. Positions 696–725 (DKVGLDLGAPPSGTTSYSQDPPSPSPEDER) are disordered. Phosphoserine is present on residues Ser-718 and Ser-720. A PDZ-binding motif is present at residues 768–770 (TSI).

It belongs to the semaphorin family. Interacts (via PDZ-binding motif) with DLG4/SAP90 (via PDZ domain 2); this interaction may promote translocation of DLG4/SAP90 to the membrane.

It is found in the cell membrane. The protein resides in the postsynaptic density. Its subcellular location is the perikaryon. The protein localises to the cell projection. It localises to the dendrite. In terms of biological role, probable cell surface receptor that regulates oligodendroglial precursor cell migration. Might also regulate differentiation of oligodendroglial precursor cells. Has growth cone collapse activity against retinal ganglion-cell axons. The sequence is that of Semaphorin-4F (SEMA4F) from Homo sapiens (Human).